The sequence spans 264 residues: Acyl-[acyl-carrier-protein]--UDP-N-acetylglucosamine O-acyltransferase (264 aa).

This sequence belongs to the transferase hexapeptide repeat family. LpxA subfamily. As to quaternary structure, homotrimer.

The protein localises to the cytoplasm. The catalysed reaction is a (3R)-hydroxyacyl-[ACP] + UDP-N-acetyl-alpha-D-glucosamine = a UDP-3-O-[(3R)-3-hydroxyacyl]-N-acetyl-alpha-D-glucosamine + holo-[ACP]. It functions in the pathway glycolipid biosynthesis; lipid IV(A) biosynthesis; lipid IV(A) from (3R)-3-hydroxytetradecanoyl-[acyl-carrier-protein] and UDP-N-acetyl-alpha-D-glucosamine: step 1/6. Functionally, involved in the biosynthesis of lipid A, a phosphorylated glycolipid that anchors the lipopolysaccharide to the outer membrane of the cell. This is Acyl-[acyl-carrier-protein]--UDP-N-acetylglucosamine O-acyltransferase from Rickettsia prowazekii (strain Madrid E).